The chain runs to 369 residues: Glutamate 5-kinase (369 aa).

Residue lysine 9 coordinates ATP. Serine 49, aspartate 136, and asparagine 148 together coordinate substrate. ATP-binding positions include 168-169 and 210-216; these read TD and TGGMLTK. The PUA domain occupies 275 to 355; that stretch reads QGSIWVDKGA…KGVLIYRDDW (81 aa).

Belongs to the glutamate 5-kinase family.

It localises to the cytoplasm. The enzyme catalyses L-glutamate + ATP = L-glutamyl 5-phosphate + ADP. The protein operates within amino-acid biosynthesis; L-proline biosynthesis; L-glutamate 5-semialdehyde from L-glutamate: step 1/2. In terms of biological role, catalyzes the transfer of a phosphate group to glutamate to form L-glutamate 5-phosphate. This chain is Glutamate 5-kinase, found in Streptococcus pneumoniae (strain Hungary19A-6).